The chain runs to 92 residues: Large ribosomal subunit protein eL42 (92 aa).

Zn(2+) contacts are provided by Cys11, Cys14, Cys70, and Cys73. A C4-type zinc finger spans residues 11–73 (CPNCRKHTVH…LDLRLKCKEC (63 aa)).

Belongs to the eukaryotic ribosomal protein eL42 family. Part of the 50S ribosomal subunit. It depends on Zn(2+) as a cofactor.

Binds to the 23S rRNA. The sequence is that of Large ribosomal subunit protein eL42 from Methanothermobacter thermautotrophicus (strain ATCC 29096 / DSM 1053 / JCM 10044 / NBRC 100330 / Delta H) (Methanobacterium thermoautotrophicum).